A 316-amino-acid chain; its full sequence is MAASLSRLSAGLAASRPLGLSRSFLLLVLLLLNSGYKGDSTKPACGQPWWPKNLDLSRHWPWEVSLRVGNEHVCGGALIDLKWVVTAAHCIQGTKEYSVILGTSKLKPPNSTRTLLIPVRDIIMHPKYWGRTFIMGDVALLQLYNPVIISKYVQPICLPEPNYSLKVGTKCWVTGWGQVKQRFSANSTLASELQEAEVFIMDNKKCDQIYRKKSHIPRVVPLVLGDMICATNYREDLCSGDSGGPLACEVEGRWILAGVLSWEKACAKVRNPGVYTRITKYSRWIKKQISNGILSVPCTSAWLLLLFWLLQPQMGP.

Residues 1 to 38 form the signal peptide; that stretch reads MAASLSRLSAGLAASRPLGLSRSFLLLVLLLLNSGYKG. A Peptidase S1 domain is found at 49 to 290; the sequence is WWPKNLDLSR…YSRWIKKQIS (242 aa). Cysteine 74 and cysteine 90 are disulfide-bonded. The active-site Charge relay system is the histidine 89. The N-linked (GlcNAc...) asparagine glycan is linked to asparagine 110. Aspartate 137 (charge relay system) is an active-site residue. 2 N-linked (GlcNAc...) asparagine glycosylation sites follow: asparagine 162 and asparagine 186. Intrachain disulfides connect cysteine 171-cysteine 248, cysteine 206-cysteine 229, and cysteine 238-cysteine 266. Catalysis depends on serine 242, which acts as the Charge relay system.

Belongs to the peptidase S1 family.

It localises to the secreted. The chain is Serine protease 45 (PRSS45) from Bos taurus (Bovine).